Reading from the N-terminus, the 776-residue chain is Disintegrin and metalloproteinase domain-containing protein 28 (776 aa).

Positions 1–19 (MLQALLTVSLLLSPVPVSA) are cleaved as a signal peptide. Residues 20–193 (IKELPGVKKY…IARPATRLVK (174 aa)) constitute a propeptide that is removed on maturation. Residues 168–175 (STCGTDGV) carry the Cysteine switch motif. Cys-170 is a Zn(2+) binding site. Over 194–666 (LNDGKVQKHE…CDDSSVVFYF (473 aa)) the chain is Extracellular. Residues 204-400 (KYIEYYLVLD…KLSNCLFNAP (197 aa)) enclose the Peptidase M12B domain. Asn-268 and Asn-275 each carry an N-linked (GlcNAc...) asparagine glycan. Cystine bridges form between Cys-315–Cys-395, Cys-355–Cys-379, Cys-357–Cys-362, and Cys-466–Cys-486. Residue His-340 coordinates Zn(2+). Glu-341 is an active-site residue. Zn(2+) contacts are provided by His-344 and His-350. N-linked (GlcNAc...) asparagine glycosylation is present at Asn-352. The region spanning 408-494 (TPICGNQMVE…NCPDDRFRAN (87 aa)) is the Disintegrin domain. 3 N-linked (GlcNAc...) asparagine glycosylation sites follow: Asn-558, Asn-603, and Asn-629. The EGF-like domain occupies 626–658 (KSTNCSSKCKGHAVCDHELQCQCEEGWSPPDCD). 3 disulfide bridges follow: Cys-630-Cys-640, Cys-634-Cys-646, and Cys-648-Cys-657. The chain crosses the membrane as a helical span at residues 667–687 (SIVVAVLFPVAVISLVVAIVI). At 688-776 (RQQSSREKQK…SSFLDSNPKA (89 aa)) the chain is on the cytoplasmic side. Residues 691 to 701 (SSREKQKKDQR) show a composition bias toward basic and acidic residues. 2 disordered regions span residues 691–728 (SSREKQKKDQRPLSTTGTRPHKQKRKPQMVKAVQPQEM) and 746–776 (PASFLISKPDFSPPPIPAPRSSSFLDSNPKA). The span at 709 to 718 (RPHKQKRKPQ) shows a compositional bias: basic residues.

Zn(2+) is required as a cofactor. Post-translationally, pro-domain removal and maturation may be, at least in part, autocatalytic. Expressed at high levels in epididymis and at lower levels in lung.

It localises to the membrane. Functionally, may play a role in the adhesive and proteolytic events that occur during lymphocyte emigration or may function in ectodomain shedding of lymphocyte surface target proteins, such as FASL and CD40L. May be involved in sperm maturation. The polypeptide is Disintegrin and metalloproteinase domain-containing protein 28 (ADAM28) (Macaca fascicularis (Crab-eating macaque)).